A 252-amino-acid polypeptide reads, in one-letter code: tRNA uridine(34) hydroxylase (252 aa).

The 95-residue stretch at 129 to 223 folds into the Rhodanese domain; the sequence is QGRPVVMLDT…YFEETGGKGF (95 aa). Cys-183 functions as the Cysteine persulfide intermediate in the catalytic mechanism.

It belongs to the TrhO family.

It catalyses the reaction uridine(34) in tRNA + AH2 + O2 = 5-hydroxyuridine(34) in tRNA + A + H2O. Catalyzes oxygen-dependent 5-hydroxyuridine (ho5U) modification at position 34 in tRNAs. This is tRNA uridine(34) hydroxylase from Bordetella petrii (strain ATCC BAA-461 / DSM 12804 / CCUG 43448).